Consider the following 366-residue polypeptide: Chorismate synthase (366 aa).

Arginine 47 provides a ligand contact to NADP(+). FMN contacts are provided by residues 124-126 (RSS), glycine 286, 301-305 (KPVAT), and arginine 327.

This sequence belongs to the chorismate synthase family. As to quaternary structure, homotetramer. FMNH2 is required as a cofactor.

The enzyme catalyses 5-O-(1-carboxyvinyl)-3-phosphoshikimate = chorismate + phosphate. Its pathway is metabolic intermediate biosynthesis; chorismate biosynthesis; chorismate from D-erythrose 4-phosphate and phosphoenolpyruvate: step 7/7. In terms of biological role, catalyzes the anti-1,4-elimination of the C-3 phosphate and the C-6 proR hydrogen from 5-enolpyruvylshikimate-3-phosphate (EPSP) to yield chorismate, which is the branch point compound that serves as the starting substrate for the three terminal pathways of aromatic amino acid biosynthesis. This reaction introduces a second double bond into the aromatic ring system. The sequence is that of Chorismate synthase from Methylacidiphilum infernorum (isolate V4) (Methylokorus infernorum (strain V4)).